The following is an 85-amino-acid chain: Elongation factor 1-beta (85 aa).

This sequence belongs to the EF-1-beta/EF-1-delta family.

Promotes the exchange of GDP for GTP in EF-1-alpha/GDP, thus allowing the regeneration of EF-1-alpha/GTP that could then be used to form the ternary complex EF-1-alpha/GTP/AAtRNA. This chain is Elongation factor 1-beta, found in Methanospirillum hungatei JF-1 (strain ATCC 27890 / DSM 864 / NBRC 100397 / JF-1).